Reading from the N-terminus, the 113-residue chain is Sporulation membrane protein YtrH (113 aa).

The next 3 helical transmembrane spans lie at 16–36 (FIAL…AYLA), 51–71 (LKIW…YSFE), and 86–106 (LLLI…ISWL).

Its subcellular location is the forespore outer membrane. Involved in sporulation. May contribute to cortex formation or stability. The protein is Sporulation membrane protein YtrH (ytrH) of Bacillus subtilis (strain 168).